We begin with the raw amino-acid sequence, 142 residues long: MFQGASSLSLDAKGRLSVPTRHRDVLVATAAGLLTITRHPHGCLMLFPRPEWEKFRERIAELPMSAQWWKRIFLGNAMDVEIDATGRVLISPELRQAAGIAKDTMLLGMGRHFELWDKASYEAQEAQAMQGAMPDVFKDFSF.

SpoVT-AbrB domains follow at residues 5–51 (ASSL…PRPE) and 77–120 (AMDV…DKAS).

It belongs to the MraZ family. Forms oligomers.

It is found in the cytoplasm. Its subcellular location is the nucleoid. The sequence is that of Transcriptional regulator MraZ from Verminephrobacter eiseniae (strain EF01-2).